We begin with the raw amino-acid sequence, 123 residues long: Potassium voltage-gated channel subfamily E member 2 (123 aa).

Asparagine 6 and asparagine 29 each carry an N-linked (GlcNAc...) asparagine glycan. A helical membrane pass occupies residues 49–69 (VILYLMVMIGMFAFIVVAILV). Over 70-123 (STVKSKRREHSQDPYHQYIVEDWQQKYRSQILHLEDSKATIHENLGATGFTVSP) the chain is Cytoplasmic.

This sequence belongs to the potassium channel KCNE family. As to quaternary structure, interacts with KCNB1. Associates with KCNH2/ERG1. May associate with KCNQ2 and KCNQ3. Associates with HCN1 and probably HCN2. Heteromultimer with KCNC2. Interacts with KCNC2. Interacts with KCNQ1; forms a heterooligomer complex that targets to the membrane raft and leading to currents with an apparently instantaneous activation, a rapid deactivation process and a linear current-voltage relationship and decreases the amplitude of the outward current.

It localises to the cell membrane. The protein resides in the apical cell membrane. Functionally, ancillary protein that functions as a regulatory subunit of the voltage-gated potassium (Kv) channel complex composed of pore-forming and potassium-conducting alpha subunits and of regulatory beta subunits. KCNE2 beta subunit modulates the gating kinetics and enhances stability of the channel complex. Alters the gating of the delayed rectifier Kv channel containing KCNB1 alpha subunit. Associates with KCNH2/HERG alpha subunit Kv channel to form the rapidly activating component of the delayed rectifying potassium current (IKr) in heart. May associate with KCNQ2 and/or KCNQ3 alpha subunits to modulate the native M-type current. May associate with HCN1 and HCN2 channel subunits to increase potassium current. Forms a heterooligomer complex with KCNQ1/KVLQT1 alpha subunits which leads to currents with an apparently instantaneous activation, a rapid deactivation process and a linear current-voltage relationship and decreases the amplitude of the outward current. KCNQ1-KCNE2 channel associates with Na(+)-coupled myo-inositol symporter in the apical membrane of choroid plexus epithelium and regulates the myo-inositol gradient between blood and cerebrospinal fluid with an impact on neuron excitability. The protein is Potassium voltage-gated channel subfamily E member 2 (Kcne2) of Cavia porcellus (Guinea pig).